The following is an 89-amino-acid chain: Acyl carrier protein MbtL (89 aa).

A Carrier domain is found at 7–82; the sequence is ESVSAALTEI…DLEAAIQAKV (76 aa). The residue at position 42 (Ser-42) is an O-(pantetheine 4'-phosphoryl)serine.

In terms of processing, 4'-phosphopantetheine is transferred from CoA to a specific serine of apo-ACP, leading to the activated holo-ACP form.

The protein resides in the cytoplasm. It participates in siderophore biosynthesis; mycobactin biosynthesis. In terms of biological role, acyl carrier protein involved in the formation of acyl-S-ACP intermediates within the mycobactin biosynthesis process. This chain is Acyl carrier protein MbtL (mbtL), found in Mycobacterium sp. (strain MCS).